The chain runs to 503 residues: uncharacterized protein (503 aa).

A coiled-coil region spans residues 437–465 (LNKDLILENLIETENENDKQEFQKLLRTI).

The protein belongs to the IIV-6 467R family.

This is an uncharacterized protein from Invertebrate iridescent virus 6 (IIV-6).